A 310-amino-acid polypeptide reads, in one-letter code: MKITVIGAGNVGATASLRIAEKQLAKEVVLIDIVEGIPQGKALDMYESGPVALFDTCIYGSNDYKDSENSDIVLITAGLARKPGMTREDLLMKNTAIIKEVTEQVMRYSKNPIIIMVSNPLDVMTYVAHTISGLAKERVIGMAGVLDTARFRSFIAEELNVSMQDINAFVLGGHGDSMVPIVKYTSIAGIPITELLPKEKIDAIVERTRNGGIEIVNHLKTGSAYYAPAASAVEMIEAIVKDRKRILPCTTMLNGQFGIDGVFCGVPVKLGKNGIEQILEINLSEYELEALQKSAALVEENCNSLQAVLS.

NAD(+) contacts are provided by residues 7-12 (GAGNVG) and aspartate 32. Substrate contacts are provided by arginine 81 and arginine 87. Residues asparagine 94 and 117 to 119 (VSN) each bind NAD(+). Asparagine 119 and arginine 150 together coordinate substrate. The Proton acceptor role is filled by histidine 174.

It belongs to the LDH/MDH superfamily. MDH type 3 family.

The enzyme catalyses (S)-malate + NAD(+) = oxaloacetate + NADH + H(+). In terms of biological role, catalyzes the reversible oxidation of malate to oxaloacetate. The polypeptide is Malate dehydrogenase (Chlorobium limicola (strain DSM 245 / NBRC 103803 / 6330)).